The sequence spans 436 residues: Trigger factor (436 aa).

Residues 161–246 (GDQVIVDFDG…VREVKEPTLP (86 aa)) form the PPIase FKBP-type domain.

The protein belongs to the FKBP-type PPIase family. Tig subfamily.

It localises to the cytoplasm. It carries out the reaction [protein]-peptidylproline (omega=180) = [protein]-peptidylproline (omega=0). Its function is as follows. Involved in protein export. Acts as a chaperone by maintaining the newly synthesized protein in an open conformation. Functions as a peptidyl-prolyl cis-trans isomerase. This chain is Trigger factor, found in Thioalkalivibrio sulfidiphilus (strain HL-EbGR7).